Reading from the N-terminus, the 196-residue chain is Cell division protein SepF (196 aa).

Positions 16 to 81 are disordered; that stretch reads EDDEEFNEPA…KRAGSTFTKP (66 aa). Residues 56 to 69 show a composition bias toward polar residues; the sequence is RPAQSTSKAQTQTA.

The protein belongs to the SepF family. In terms of assembly, homodimer. Interacts with FtsZ.

It localises to the cytoplasm. Functionally, cell division protein that is part of the divisome complex and is recruited early to the Z-ring. Probably stimulates Z-ring formation, perhaps through the cross-linking of FtsZ protofilaments. Its function overlaps with FtsA. The sequence is that of Cell division protein SepF from Lactococcus lactis subsp. lactis (strain IL1403) (Streptococcus lactis).